A 500-amino-acid polypeptide reads, in one-letter code: MEDFQVYFELYRSQQHDLLYPLIFRESIYALAHDRGLNRSVLLDNVGYDKKASLLIIKRLISRMYQQNRFIISFNDSNQNKFLGYNKNLYSQMISEGFAVIVEIPFSLRLVSSLEETETVKSYNLRSIHSIFPFLEDKFPHLNYASDVLIPYPIHLEILVQTLRYCMKDPSSLHLLRLFLYEYYSWNTVITPKKSLFAKRNQRLFLLLYNSYVGEYESILLFLRNQSNHLRLTSFRIFFERIRFYEKIKYPVEEVLFPATLWFFKDPFIQYVSYQGKSILASKDTPLLMTKWKYYLVNFWQCHFYVWSQPGRIHINQLFKYSFDFLGYLSSIRPNISVVRSQLLENSFLMNNLMKKLDTLFPTIPMIGSLAKVKFCNTLGHPISKSSWADLSDSDIIGRFVRIGGNLSHYYSGSSKKKSLYRIKYILRLSCVKTLARKHKSTVRTFLKRLGPKLLDEFFTEEEQVFALLFPRTSSTSKRLYRGQIWYLDILCINDLVNHE.

Belongs to the intron maturase 2 family. MatK subfamily.

Its subcellular location is the plastid. The protein resides in the chloroplast. In terms of biological role, usually encoded in the trnK tRNA gene intron. Probably assists in splicing its own and other chloroplast group II introns. This is Maturase K from Argentina anserina (Silverweed cinquefoil).